Consider the following 966-residue polypeptide: Alpha-1,4 glucan phosphorylase L-1 isozyme, chloroplastic/amyloplastic (966 aa).

A chloroplast-targeting transit peptide spans 1–50 (MATANGAHLFNHYSSNSRFIHFTSRNTSSKLFLTKTSHFRRPKRCFHVNN). At Lys-812 the chain carries N6-(pyridoxal phosphate)lysine.

This sequence belongs to the glycogen phosphorylase family. It depends on pyridoxal 5'-phosphate as a cofactor. In terms of tissue distribution, tuber.

It is found in the plastid. The protein localises to the chloroplast. The protein resides in the amyloplast. The enzyme catalyses [(1-&gt;4)-alpha-D-glucosyl](n) + phosphate = [(1-&gt;4)-alpha-D-glucosyl](n-1) + alpha-D-glucose 1-phosphate. Phosphorylase is an important allosteric enzyme in carbohydrate metabolism. Enzymes from different sources differ in their regulatory mechanisms and in their natural substrates. However, all known phosphorylases share catalytic and structural properties. This chain is Alpha-1,4 glucan phosphorylase L-1 isozyme, chloroplastic/amyloplastic, found in Solanum tuberosum (Potato).